We begin with the raw amino-acid sequence, 167 residues long: uncharacterized protein (167 aa).

This is an uncharacterized protein from Mycobacterium tuberculosis (strain CDC 1551 / Oshkosh).